Here is a 296-residue protein sequence, read N- to C-terminus: Thymidylate synthase (296 aa).

Residues arginine 23 and 157–158 (RR) each bind dUMP. Cysteine 177 (nucleophile) is an active-site residue. Residues 198 to 201 (RSAD), asparagine 209, and 239 to 241 (HIY) contribute to the dUMP site. Aspartate 201 serves as a coordination point for (6R)-5,10-methylene-5,6,7,8-tetrahydrofolate. Alanine 295 serves as a coordination point for (6R)-5,10-methylene-5,6,7,8-tetrahydrofolate.

It belongs to the thymidylate synthase family. Bacterial-type ThyA subfamily. Homodimer.

It is found in the cytoplasm. It carries out the reaction dUMP + (6R)-5,10-methylene-5,6,7,8-tetrahydrofolate = 7,8-dihydrofolate + dTMP. It functions in the pathway pyrimidine metabolism; dTTP biosynthesis. Its function is as follows. Catalyzes the reductive methylation of 2'-deoxyuridine-5'-monophosphate (dUMP) to 2'-deoxythymidine-5'-monophosphate (dTMP) while utilizing 5,10-methylenetetrahydrofolate (mTHF) as the methyl donor and reductant in the reaction, yielding dihydrofolate (DHF) as a by-product. This enzymatic reaction provides an intracellular de novo source of dTMP, an essential precursor for DNA biosynthesis. The polypeptide is Thymidylate synthase (Zymomonas mobilis subsp. mobilis (strain ATCC 31821 / ZM4 / CP4)).